The primary structure comprises 394 residues: Protein NDRG1 (394 aa).

An N-acetylserine modification is found at Ser2. A phosphoserine mark is found at Ser2, Ser319, and Ser326. The segment at 325-394 (RSRTASGSSV…AGPKSMEVSC (70 aa)) is disordered. Residues 327 to 339 (RTASGSSVTSLDG) show a composition bias toward polar residues. Thr328 is modified (phosphothreonine; by SGK1). A phosphoserine; by SGK1 mark is found at Ser330 and Ser332. The residue at position 333 (Ser333) is a Phosphoserine. The residue at position 335 (Thr335) is a Phosphothreonine. Ser336 bears the Phosphoserine mark. A run of 3 repeats spans residues 339–348 (GTRSRSHTSE), 349–358 (GTRSRSHTSE), and 359–368 (GTRSRSHTSE). Residues 339-368 (GTRSRSHTSEGTRSRSHTSEGTRSRSHTSE) form a 3 X 10 AA tandem repeats of G-T-R-S-R-S-H-T-S-E region. Thr340 carries the post-translational modification Phosphothreonine. Ser342 carries the post-translational modification Phosphoserine. Basic and acidic residues predominate over residues 345–371 (HTSEGTRSRSHTSEGTRSRSHTSEGAH). Thr346 bears the Phosphothreonine; by SGK1 mark. Ser352 carries the phosphoserine modification. Position 356 is a phosphothreonine; by SGK1 (Thr356). The residue at position 362 (Ser362) is a Phosphoserine. Ser364 bears the Phosphoserine; by SGK1 mark. Thr366 bears the Phosphothreonine; by SGK1 mark. Phosphothreonine is present on Thr375.

This sequence belongs to the NDRG family. As to quaternary structure, interacts with RAB4A (membrane-bound form); the interaction involves NDRG1 in vesicular recycling of CDH1. Post-translationally, under stress conditions, phosphorylated in the C-terminal on many serine and threonine residues. Phosphorylated in vitro by PKA. Phosphorylation enhanced by increased intracellular cAMP levels. Homocysteine induces dephosphorylation. Phosphorylation by SGK1 is cell cycle dependent. Ubiquitous; expressed most prominently in placental membranes and prostate, kidney, small intestine, and ovary tissues. Also expressed in heart, brain, skeletal muscle, lung, liver and pancreas. Low levels in peripheral blood leukocytes and in tissues of the immune system. Expressed mainly in epithelial cells. Also found in Schwann cells of peripheral neurons. Reduced expression in adenocarcinomas compared to normal tissues. In colon, prostate and placental membranes, the cells that border the lumen show the highest expression.

The protein resides in the cytoplasm. The protein localises to the cytosol. Its subcellular location is the cytoskeleton. It is found in the microtubule organizing center. It localises to the centrosome. The protein resides in the nucleus. The protein localises to the cell membrane. Its function is as follows. Stress-responsive protein involved in hormone responses, cell growth, and differentiation. Acts as a tumor suppressor in many cell types. Necessary but not sufficient for p53/TP53-mediated caspase activation and apoptosis. Has a role in cell trafficking, notably of the Schwann cell, and is necessary for the maintenance and development of the peripheral nerve myelin sheath. Required for vesicular recycling of CDH1 and TF. May also function in lipid trafficking. Protects cells from spindle disruption damage. Functions in p53/TP53-dependent mitotic spindle checkpoint. Regulates microtubule dynamics and maintains euploidy. The polypeptide is Protein NDRG1 (NDRG1) (Homo sapiens (Human)).